The sequence spans 652 residues: Probable potassium transport system protein Kup (652 aa).

A compositionally biased stretch (low complexity) spans 1-20 (MSNDTSPGTSSVDSKSSDPS). A disordered region spans residues 1–26 (MSNDTSPGTSSVDSKSSDPSYGVPGH). 12 helical membrane passes run 36 to 56 (LSLG…LYAL), 76 to 96 (LVSL…VMFI), 125 to 145 (WLIV…MITP), 161 to 181 (PSFD…LFCI), 193 to 213 (FGPI…FNII), 228 to 248 (AIHF…SVVL), 270 to 290 (LGWY…QCAL), 314 to 334 (LIIL…TGAF), 362 to 382 (IYIP…IAMF), 391 to 411 (AYGI…GVLV), 419 to 439 (AWQS…FFLS), and 444 to 464 (IPEG…MLMT).

It belongs to the HAK/KUP transporter (TC 2.A.72) family.

The protein resides in the cell inner membrane. The enzyme catalyses K(+)(in) + H(+)(in) = K(+)(out) + H(+)(out). Transport of potassium into the cell. Likely operates as a K(+):H(+) symporter. The chain is Probable potassium transport system protein Kup from Zymomonas mobilis subsp. mobilis (strain ATCC 31821 / ZM4 / CP4).